The sequence spans 414 residues: Argininosuccinate synthase (414 aa).

ATP is bound by residues 9–17 and alanine 35; that span reads AYSGGLDTS. Tyrosine 86 and serine 91 together coordinate L-citrulline. ATP is bound at residue 114-122; that stretch reads SHGATGKGN. L-aspartate-binding residues include threonine 118, asparagine 122, and aspartate 123. Residue asparagine 122 coordinates L-citrulline. L-citrulline is bound by residues arginine 126, serine 179, serine 188, glutamate 269, and tyrosine 281.

This sequence belongs to the argininosuccinate synthase family. Homotetramer.

It is found in the cytoplasm. The protein resides in the cytosol. The enzyme catalyses L-citrulline + L-aspartate + ATP = 2-(N(omega)-L-arginino)succinate + AMP + diphosphate + H(+). Its pathway is amino-acid biosynthesis; L-arginine biosynthesis; L-arginine from L-ornithine and carbamoyl phosphate: step 2/3. The protein operates within nitrogen metabolism; urea cycle; (N(omega)-L-arginino)succinate from L-aspartate and L-citrulline: step 1/1. In terms of biological role, one of the enzymes of the urea cycle, the metabolic pathway transforming neurotoxic amonia produced by protein catabolism into inocuous urea in the liver of ureotelic animals. Catalyzes the formation of arginosuccinate from aspartate, citrulline and ATP and together with ASL it is responsible for the biosynthesis of arginine in most body tissues. The sequence is that of Argininosuccinate synthase from Danio rerio (Zebrafish).